The chain runs to 763 residues: Phosphoglycerol transferase I (763 aa).

4 helical membrane-spanning segments follow: residues 4 to 19 (LLSF…IYAW), 26 to 48 (WWFA…LFAS), 76 to 98 (YILP…GWIL), and 105 to 127 (PHHF…ASPA).

It belongs to the OpgB family.

It localises to the cell inner membrane. It carries out the reaction a phosphatidylglycerol + a membrane-derived-oligosaccharide D-glucose = a 1,2-diacyl-sn-glycerol + a membrane-derived-oligosaccharide 6-(glycerophospho)-D-glucose.. Its pathway is glycan metabolism; osmoregulated periplasmic glucan (OPG) biosynthesis. In terms of biological role, transfers a phosphoglycerol residue from phosphatidylglycerol to the membrane-bound nascent glucan backbones. The protein is Phosphoglycerol transferase I of Escherichia coli O157:H7.